The chain runs to 168 residues: Peptide methionine sulfoxide reductase 2 (168 aa).

Positions 40-168 (DVKWNDALTP…NSASLNLKKD (129 aa)) constitute a MsrB domain. 4 residues coordinate Zn(2+): Cys79, Cys82, Cys128, and Cys131. A disulfide bridge connects residues Cys97 and Cys157. Cys157 functions as the Nucleophile in the catalytic mechanism.

The protein belongs to the MsrB Met sulfoxide reductase family. Requires Zn(2+) as cofactor.

The catalysed reaction is L-methionyl-[protein] + [thioredoxin]-disulfide + H2O = L-methionyl-(R)-S-oxide-[protein] + [thioredoxin]-dithiol. In terms of biological role, methionine-R-sulfoxide reductase which catalyzes the reduction of methionine sulfoxide (MetSO) to methionine in proteins. Plays a protective role against oxidative stress by restoring activity to proteins that have been inactivated by methionine oxidation. Protects iron-sulfur clusters from oxidative inactivation along with MXR1. Involved in the regulation of lifespan. The polypeptide is Peptide methionine sulfoxide reductase 2 (MXR2) (Saccharomyces cerevisiae (strain ATCC 204508 / S288c) (Baker's yeast)).